Reading from the N-terminus, the 119-residue chain is gSG7 salivary protein (119 aa).

Disulfide bonds link C58/C113 and C81/C91.

The protein localises to the secreted. Its activity is regulated as follows. The activity is increased in the presence of host properdin (CFP). In terms of biological role, salivary protein that inhibits the alternative pathway of complement system activation in the host while having no inhibitory effect on the classical pathway. Inhibits activity of activated host C3-convertase complex C3bBb (C3-CFB). Enhances accumulation of C3bBb on immobilized properdin. This Anopheles freeborni (Western malaria mosquito) protein is gSG7 salivary protein.